The sequence spans 147 residues: Large ribosomal subunit protein uL15 (147 aa).

The interval M1–R42 is disordered. Positions K15 to K28 are enriched in basic and acidic residues.

Belongs to the universal ribosomal protein uL15 family. Part of the 50S ribosomal subunit.

Functionally, binds to the 23S rRNA. The polypeptide is Large ribosomal subunit protein uL15 (Nocardia farcinica (strain IFM 10152)).